Reading from the N-terminus, the 233-residue chain is Large ribosomal subunit protein uL1 (233 aa).

The protein belongs to the universal ribosomal protein uL1 family. In terms of assembly, part of the 50S ribosomal subunit.

Its function is as follows. Binds directly to 23S rRNA. The L1 stalk is quite mobile in the ribosome, and is involved in E site tRNA release. Protein L1 is also a translational repressor protein, it controls the translation of the L11 operon by binding to its mRNA. This chain is Large ribosomal subunit protein uL1, found in Vibrio cholerae serotype O1 (strain ATCC 39541 / Classical Ogawa 395 / O395).